Reading from the N-terminus, the 412-residue chain is DnaJ homolog subfamily A member 2 (412 aa).

The J domain occupies 8–70 (KLYDILGVPP…EKRELYDRYG (63 aa)). Lysine 39 bears the N6-acetyllysine mark. Phosphoserine occurs at positions 78 and 123. Residues 130-214 (GKTTKLQLSK…CEGKKVIKEV (85 aa)) form a CR-type zinc finger. Residue lysine 134 forms a Glycyl lysine isopeptide (Lys-Gly) (interchain with G-Cter in SUMO2) linkage. Zn(2+)-binding residues include cysteine 143 and cysteine 146. The CXXCXGXG motif repeat unit spans residues 143-150 (CSACSGQG). Lysine 152 carries the N6-acetyllysine modification. Residues cysteine 159, cysteine 162, cysteine 186, cysteine 189, cysteine 202, and cysteine 205 each coordinate Zn(2+). CXXCXGXG motif repeat units lie at residues 159-166 (CSACRGRG), 186-193 (CSDCNGEG), and 202-209 (CKKCEGKK). A disordered region spans residues 365–412 (IGETEEVELQEFDSTRGSGGGQRREAYNDSSDEESSSHHGPGVQCAHQ). Phosphotyrosine is present on tyrosine 391. Phosphoserine occurs at positions 394 and 395. Cysteine 409 is modified (cysteine methyl ester). Cysteine 409 carries the S-farnesyl cysteine lipid modification. Positions 410 to 412 (AHQ) are cleaved as a propeptide — removed in mature form.

Its subcellular location is the membrane. Co-chaperone of Hsc70. Stimulates ATP hydrolysis and the folding of unfolded proteins mediated by HSPA1A/B (in vitro). The chain is DnaJ homolog subfamily A member 2 (Dnaja2) from Rattus norvegicus (Rat).